Reading from the N-terminus, the 212-residue chain is 3,4-dihydroxy-2-butanone 4-phosphate synthase (212 aa).

D-ribulose 5-phosphate contacts are provided by residues R37 to E38, D42, R150 to T154, and E174. Position 38 (E38) interacts with Mg(2+). H153 provides a ligand contact to Mg(2+).

This sequence belongs to the DHBP synthase family. As to quaternary structure, homodimer. Mg(2+) is required as a cofactor. It depends on Mn(2+) as a cofactor.

The enzyme catalyses D-ribulose 5-phosphate = (2S)-2-hydroxy-3-oxobutyl phosphate + formate + H(+). Its pathway is cofactor biosynthesis; riboflavin biosynthesis; 2-hydroxy-3-oxobutyl phosphate from D-ribulose 5-phosphate: step 1/1. Its function is as follows. Catalyzes the conversion of D-ribulose 5-phosphate to formate and 3,4-dihydroxy-2-butanone 4-phosphate. In Histophilus somni (strain 129Pt) (Haemophilus somnus), this protein is 3,4-dihydroxy-2-butanone 4-phosphate synthase.